The following is a 471-amino-acid chain: Major facilitator-type transporter psiT1 (471 aa).

The disordered stretch occupies residues 1 to 36 (MNPTTATDAHERTSLLSGRPQSAANSTAPYERQVQP). Residues 14-36 (SLLSGRPQSAANSTAPYERQVQP) are compositionally biased toward polar residues. An N-linked (GlcNAc...) asparagine glycan is attached at N25. 8 helical membrane passes run 44–64 (TPVT…TMVI), 108–128 (AIMV…GTGI), 140–160 (PVLM…LTVQ), 168–188 (LVTF…TTVF), 212–232 (GWLV…TTFL), 237–257 (AVYI…AFVL), 322–342 (LHSF…LIFF), and 356–376 (VMTT…PLFI). Residue N384 is glycosylated (N-linked (GlcNAc...) asparagine). The helical transmembrane segment at 424–444 (VHITVISWTIESLAYIVLGTV) threads the bilayer.

This sequence belongs to the major facilitator superfamily. TCR/Tet family.

Its subcellular location is the membrane. Functionally, major facilitator-type transporter; part of the gene cluster that mediates the biosynthesis of psilocybin, a psychotropic tryptamine-derived natural product. This is Major facilitator-type transporter psiT1 from Psilocybe cyanescens.